The primary structure comprises 1396 residues: DNA-directed RNA polymerase subunit beta' (1396 aa).

The Zn(2+) site is built by C72, C74, C87, and C90. Mg(2+)-binding residues include D463, D465, and D467. Zn(2+)-binding residues include C814, C889, C896, and C899.

Belongs to the RNA polymerase beta' chain family. In terms of assembly, the RNAP catalytic core consists of 2 alpha, 1 beta, 1 beta' and 1 omega subunit. When a sigma factor is associated with the core the holoenzyme is formed, which can initiate transcription. It depends on Mg(2+) as a cofactor. Zn(2+) is required as a cofactor.

The catalysed reaction is RNA(n) + a ribonucleoside 5'-triphosphate = RNA(n+1) + diphosphate. Its function is as follows. DNA-dependent RNA polymerase catalyzes the transcription of DNA into RNA using the four ribonucleoside triphosphates as substrates. The sequence is that of DNA-directed RNA polymerase subunit beta' from Chlamydia muridarum (strain MoPn / Nigg).